The primary structure comprises 516 residues: Bifunctional purine biosynthesis protein PurH (516 aa).

The 150-residue stretch at 1-150 (MSDDRKQIKR…KNHPSVAVVV (150 aa)) folds into the MGS-like domain.

The protein belongs to the PurH family.

It carries out the reaction (6R)-10-formyltetrahydrofolate + 5-amino-1-(5-phospho-beta-D-ribosyl)imidazole-4-carboxamide = 5-formamido-1-(5-phospho-D-ribosyl)imidazole-4-carboxamide + (6S)-5,6,7,8-tetrahydrofolate. The catalysed reaction is IMP + H2O = 5-formamido-1-(5-phospho-D-ribosyl)imidazole-4-carboxamide. It functions in the pathway purine metabolism; IMP biosynthesis via de novo pathway; 5-formamido-1-(5-phospho-D-ribosyl)imidazole-4-carboxamide from 5-amino-1-(5-phospho-D-ribosyl)imidazole-4-carboxamide (10-formyl THF route): step 1/1. It participates in purine metabolism; IMP biosynthesis via de novo pathway; IMP from 5-formamido-1-(5-phospho-D-ribosyl)imidazole-4-carboxamide: step 1/1. This chain is Bifunctional purine biosynthesis protein PurH, found in Corynebacterium ammoniagenes (Brevibacterium ammoniagenes).